The following is a 216-amino-acid chain: MLASPARPTLRMLANHALSTPHCACSPAPAPRTASASRRRCVPVEARAAGVFGDRLAGVFGSRGLKHGGVQAPRPRVVRAEPRAGFAVVRSPRRLCGRSHAPQPPAHLGLGPGCFPAVAVVVPVPGSRAHRPFAALLVEGSFLGDPPIPPRRSGVLARGSAGADCLASSVTPGPSLWIPLLLVAGCVSCFVGLAVCVWMQARVSPAWPAGLFLLPR.

The chain crosses the membrane as a helical span at residues 177–197; it reads WIPLLLVAGCVSCFVGLAVCV.

Expressed only in testis.

It is found in the cytoplasm. The protein resides in the membrane. This Homo sapiens (Human) protein is Putative transmembrane protein RNF32-DT.